The following is a 410-amino-acid chain: Multifunctional CCA protein (410 aa).

ATP-binding residues include Gly8 and Arg11. Residues Gly8 and Arg11 each coordinate CTP. Positions 21 and 23 each coordinate Mg(2+). The ATP site is built by Arg91, Arg137, and Arg140. Arg91, Arg137, and Arg140 together coordinate CTP. The region spanning 228 to 329 (TGIHSLMTLR…VKLLEQVDAF (102 aa)) is the HD domain.

The protein belongs to the tRNA nucleotidyltransferase/poly(A) polymerase family. Bacterial CCA-adding enzyme type 1 subfamily. Monomer. Can also form homodimers and oligomers. The cofactor is Mg(2+). Ni(2+) serves as cofactor.

The catalysed reaction is a tRNA precursor + 2 CTP + ATP = a tRNA with a 3' CCA end + 3 diphosphate. It carries out the reaction a tRNA with a 3' CCA end + 2 CTP + ATP = a tRNA with a 3' CCACCA end + 3 diphosphate. Its function is as follows. Catalyzes the addition and repair of the essential 3'-terminal CCA sequence in tRNAs without using a nucleic acid template. Adds these three nucleotides in the order of C, C, and A to the tRNA nucleotide-73, using CTP and ATP as substrates and producing inorganic pyrophosphate. tRNA 3'-terminal CCA addition is required both for tRNA processing and repair. Also involved in tRNA surveillance by mediating tandem CCA addition to generate a CCACCA at the 3' terminus of unstable tRNAs. While stable tRNAs receive only 3'-terminal CCA, unstable tRNAs are marked with CCACCA and rapidly degraded. This is Multifunctional CCA protein from Legionella pneumophila subsp. pneumophila (strain Philadelphia 1 / ATCC 33152 / DSM 7513).